A 331-amino-acid polypeptide reads, in one-letter code: Putative peptidyl-prolyl cis-trans isomerase RC0542 (331 aa).

Positions 33–54 (EQTASNNSSTDENQTSINNEPP) are disordered. Residues 128 to 226 (GHVVTVFYQI…SNEVKIYDDE (99 aa)) enclose the PPIase FKBP-type domain.

The catalysed reaction is [protein]-peptidylproline (omega=180) = [protein]-peptidylproline (omega=0). In Rickettsia conorii (strain ATCC VR-613 / Malish 7), this protein is Putative peptidyl-prolyl cis-trans isomerase RC0542.